A 750-amino-acid chain; its full sequence is Ribosomal RNA large subunit methyltransferase K/L (750 aa).

Positions 46–157 (TAYRLCLWSR…RGEAILSLDL (112 aa)) constitute a THUMP domain.

The protein belongs to the methyltransferase superfamily. RlmKL family.

It is found in the cytoplasm. The catalysed reaction is guanosine(2445) in 23S rRNA + S-adenosyl-L-methionine = N(2)-methylguanosine(2445) in 23S rRNA + S-adenosyl-L-homocysteine + H(+). The enzyme catalyses guanosine(2069) in 23S rRNA + S-adenosyl-L-methionine = N(2)-methylguanosine(2069) in 23S rRNA + S-adenosyl-L-homocysteine + H(+). In terms of biological role, specifically methylates the guanine in position 2445 (m2G2445) and the guanine in position 2069 (m7G2069) of 23S rRNA. In Pseudomonas savastanoi pv. phaseolicola (strain 1448A / Race 6) (Pseudomonas syringae pv. phaseolicola (strain 1448A / Race 6)), this protein is Ribosomal RNA large subunit methyltransferase K/L.